Reading from the N-terminus, the 1446-residue chain is Major viral transcription factor ICP4 homolog (1446 aa).

Disordered stretches follow at residues 25 to 59 (AEEE…GGLF), 73 to 493 (AAAG…PPAD), 801 to 987 (PGPA…HTPR), and 1385 to 1446 (THRP…LLLR). Low complexity predominate over residues 73–94 (AAAGATRPPRPPSAQQQQQPRR). A compositionally biased stretch (acidic residues) spans 101 to 112 (VLDDEDEEEDEP). Composition is skewed to low complexity over residues 166 to 189 (RSSP…APRR) and 216 to 241 (PAAV…PVSA). Residues 262–277 (REPLLDEPAAARRLDP) are compositionally biased toward basic and acidic residues. Composition is skewed to low complexity over residues 284 to 306 (SPVS…ETVA) and 345 to 397 (GFSS…SSSS). The segment covering 415–426 (GPPPSPPAPAAA) has biased composition (pro residues). Residues 427-442 (PRPSASSASSSAAASP) are compositionally biased toward low complexity. Over residues 803 to 815 (PAEPAPGLPPLWP) the composition is skewed to pro residues. Residues 827 to 877 (PAAAGAPSGLPGSGPSSPASTKSSSSTKSSSSTKSGLSGSSGYASSPAAGP) show a composition bias toward low complexity. The span at 883-892 (RRKKKRRAPG) shows a compositional bias: basic residues. Residues 933 to 952 (LGLGPAPDPAPALLSSSSSS) are compositionally biased toward low complexity.

Belongs to the herpesviridae ICP4 family. In terms of processing, a long stretch of serine residues may be a major site of phosphorylation.

It is found in the host nucleus. This IE protein is a multifunctional protein capable of migrating to the nucleus, binding to DNA, trans-activating other viral genes, and autoregulating its own synthesis. This chain is Major viral transcription factor ICP4 homolog (IE), found in Suid herpesvirus 1 (strain Kaplan) (SuHV-1).